The chain runs to 446 residues: N-succinylarginine dihydrolase (446 aa).

Residues 19–28 (AGLSFGNVAS), Asn-110, and 137–138 (HR) each bind substrate. Glu-174 is an active-site residue. Position 213 (Arg-213) interacts with substrate. The active site involves His-249. Substrate contacts are provided by Asp-251 and Asn-364. Cys-370 serves as the catalytic Nucleophile.

It belongs to the succinylarginine dihydrolase family. In terms of assembly, homodimer.

The catalysed reaction is N(2)-succinyl-L-arginine + 2 H2O + 2 H(+) = N(2)-succinyl-L-ornithine + 2 NH4(+) + CO2. It functions in the pathway amino-acid degradation; L-arginine degradation via AST pathway; L-glutamate and succinate from L-arginine: step 2/5. Catalyzes the hydrolysis of N(2)-succinylarginine into N(2)-succinylornithine, ammonia and CO(2). The protein is N-succinylarginine dihydrolase of Burkholderia lata (strain ATCC 17760 / DSM 23089 / LMG 22485 / NCIMB 9086 / R18194 / 383).